A 322-amino-acid chain; its full sequence is Mitochondrial thiamine pyrophosphate carrier 1 (322 aa).

Solcar repeat units follow at residues G12–G111, P122–P208, and P215–I310. 6 helical membrane-spanning segments follow: residues M18–V38, L92–V108, F128–L148, F180–A200, A221–I241, and G285–W302.

The protein belongs to the mitochondrial carrier (TC 2.A.29) family.

Its subcellular location is the mitochondrion inner membrane. Its function is as follows. Mitochondrial transporter that mediates uptake of thiamine pyrophosphate (ThPP) into mitochondria. In Botryotinia fuckeliana (strain B05.10) (Noble rot fungus), this protein is Mitochondrial thiamine pyrophosphate carrier 1 (tpc1).